We begin with the raw amino-acid sequence, 365 residues long: Prostaglandin E2 receptor EP3 subtype (365 aa).

The segment at 1–22 (MASMWAPEHSAEAHSNLSSTTD) is disordered. The Extracellular segment spans residues 1–30 (MASMWAPEHSAEAHSNLSSTTDDCGSVSVA). Residues 13 to 22 (AHSNLSSTTD) are compositionally biased toward polar residues. An N-linked (GlcNAc...) asparagine glycan is attached at Asn16. A helical transmembrane segment spans residues 31 to 55 (FPITMMVTGFVGNALAMLLVSRSYR). Topologically, residues 56-68 (RRESKRKKSFLLC) are cytoplasmic. The chain crosses the membrane as a helical span at residues 69 to 89 (IGWLALTDLVGQLLTSPVVIL). Residues 90–108 (VYLSQRRWEQLDPSGRLCT) are Extracellular-facing. An intrachain disulfide couples Cys107 to Cys184. The chain crosses the membrane as a helical span at residues 109–130 (FFGLTMTVFGLSSLLVASAMAV). Topologically, residues 131-151 (ERALAIRAPHWYASHMKTRAT) are cytoplasmic. Residues 152–173 (PVLLGVWLSVLAFALLPVLGVG) traverse the membrane as a helical segment. Residues 174–203 (RYSVQWPGTWCFISTGPAGNETDPAREPGS) are Extracellular-facing. N-linked (GlcNAc...) asparagine glycosylation is present at Asn193. Residues 204 to 229 (VAFASAFACLGLLALVVTFACNLATI) form a helical membrane-spanning segment. Topologically, residues 230–259 (KALVSRCRAKAAVSQSSAQWGRITTETAIQ) are cytoplasmic. The chain crosses the membrane as a helical span at residues 260-283 (LMGIMCVLSVCWSPLLIMMLKMIF). Over 284-303 (NQMSVEQCKTQMGKEKECNS) the chain is Extracellular. The helical transmembrane segment at 304–325 (FLIAVRLASLNQILDPWVYLLL) threads the bilayer. Topologically, residues 326–365 (RKILLRKFCQIRDHTNYASSSTSLPCPGSSALMWSDQLER) are cytoplasmic.

The protein belongs to the G-protein coupled receptor 1 family. In terms of assembly, interacts (via C-terminus) with MKLN1. In terms of processing, ligand binding is affected by cAMP-dependent phosphorylation in brain membranes. Detected in platelets. Kidney, uterus, and mastocytoma cells, and in a lesser amount in brain, thymus, lung, heart, stomach and spleen.

It localises to the cell membrane. Its function is as follows. Receptor for prostaglandin E2 (PGE2). Required for normal development of fever in response to pyrinogens, including IL1B, prostaglandin E2 and bacterial lipopolysaccharide (LPS). Required for normal potentiation of platelet aggregation by prostaglandin E2, and thus plays a role in the regulation of blood coagulation. Required for increased HCO3(-) secretion in the duodenum in response to mucosal acidification, and thereby contributes to the protection of the mucosa against acid-induced ulceration. Not required for normal kidney function, normal urine volume and osmolality. Receptor for prostaglandin E2 (PGE2); ligand binding activates a signaling cascade via G(i) proteins that leads to inhibition of adenylate cyclase. Shows high agonist-independent constitutive inhibition of adenylate cyclase. Functionally, receptor for prostaglandin E2 (PGE2); ligand binding activates a signaling cascade via G(i) proteins that leads to inhibition of adenylate cyclase. Requires much higher ligand concentrations than isoform Alpha for activation. Does not display agonist-independent constitutive inhibition of adenylate cyclase. In terms of biological role, receptor for prostaglandin E2 (PGE2); ligand binding can activate several distinct signaling cascades, resulting in activation or inhibition of adenylate cyclase. The polypeptide is Prostaglandin E2 receptor EP3 subtype (Ptger3) (Mus musculus (Mouse)).